We begin with the raw amino-acid sequence, 393 residues long: Probable acetyl-CoA acyltransferase (393 aa).

Catalysis depends on Cys-88, which acts as the Acyl-thioester intermediate. Residues His-349 and Cys-378 each act as proton acceptor in the active site.

It belongs to the thiolase-like superfamily. Thiolase family.

It localises to the cytoplasm. It catalyses the reaction 2 acetyl-CoA = acetoacetyl-CoA + CoA. The chain is Probable acetyl-CoA acyltransferase from Staphylococcus aureus (strain Mu50 / ATCC 700699).